We begin with the raw amino-acid sequence, 75 residues long: Transaldolase (75 aa).

Belongs to the transaldolase family. Type 1 subfamily. In terms of assembly, homodimer. Post-translationally, phosphorylated. As to expression, predominantly expressed in Y-organs.

It is found in the cytoplasm. It catalyses the reaction D-sedoheptulose 7-phosphate + D-glyceraldehyde 3-phosphate = D-erythrose 4-phosphate + beta-D-fructose 6-phosphate. Its pathway is carbohydrate degradation; pentose phosphate pathway; D-glyceraldehyde 3-phosphate and beta-D-fructose 6-phosphate from D-ribose 5-phosphate and D-xylulose 5-phosphate (non-oxidative stage): step 2/3. Functionally, transaldolase is important for the balance of metabolites in the pentose-phosphate pathway. May play a role in the conversion of sterols into ecdysteroids via NADPH. This Carcinus maenas (Common shore crab) protein is Transaldolase.